Reading from the N-terminus, the 94-residue chain is Cytochrome c-551 (94 aa).

Residues 1-14 form the signal peptide; the sequence is MAFTAMTVAPSALA. Heme c-binding residues include Cys24, Cys27, His28, and Met73.

In terms of processing, binds 1 heme c group covalently per subunit.

In terms of biological role, efficiently couple electron transfer between the cytochrome bc1 complex and the photosynthetic reaction center. The protein is Cytochrome c-551 of Allochromatium vinosum (strain ATCC 17899 / DSM 180 / NBRC 103801 / NCIMB 10441 / D) (Chromatium vinosum).